A 324-amino-acid polypeptide reads, in one-letter code: Glutathione synthetase (324 aa).

Positions lysine 129–valine 313 constitute an ATP-grasp domain. Valine 155–glycine 211 contributes to the ATP binding site. Mg(2+) is bound by residues glutamate 284 and asparagine 286.

This sequence belongs to the prokaryotic GSH synthase family. Mg(2+) serves as cofactor. The cofactor is Mn(2+).

The catalysed reaction is gamma-L-glutamyl-L-cysteine + glycine + ATP = glutathione + ADP + phosphate + H(+). It participates in sulfur metabolism; glutathione biosynthesis; glutathione from L-cysteine and L-glutamate: step 2/2. The protein is Glutathione synthetase of Gloeobacter violaceus (strain ATCC 29082 / PCC 7421).